The primary structure comprises 458 residues: Cysteine protease ATG4C (458 aa).

Methionine 1 bears the N-acetylmethionine mark. Residue cysteine 111 is the Nucleophile of the active site. Residues aspartate 345 and histidine 347 contribute to the active site. Serine 451 carries the phosphoserine modification. The residue at position 452 (threonine 452) is a Phosphothreonine.

The protein belongs to the peptidase C54 family.

It localises to the cytoplasm. The enzyme catalyses [protein]-C-terminal L-amino acid-glycyl-phosphatidylethanolamide + H2O = [protein]-C-terminal L-amino acid-glycine + a 1,2-diacyl-sn-glycero-3-phosphoethanolamine. With respect to regulation, inhibited by N-ethylmaleimide. Cysteine protease that plays a key role in autophagy by mediating both proteolytic activation and delipidation of ATG8 family proteins. The protease activity is required for proteolytic activation of ATG8 family proteins: cleaves the C-terminal amino acid of ATG8 proteins MAP1LC3 and GABARAPL2, to reveal a C-terminal glycine. Exposure of the glycine at the C-terminus is essential for ATG8 proteins conjugation to phosphatidylethanolamine (PE) and insertion to membranes, which is necessary for autophagy. In addition to the protease activity, also mediates delipidation of ATG8 family proteins. Catalyzes delipidation of PE-conjugated forms of ATG8 proteins during macroautophagy. Compared to ATG4B, the major protein for proteolytic activation of ATG8 proteins, shows weaker ability to cleave the C-terminal amino acid of ATG8 proteins, while it displays stronger delipidation activity. In contrast to other members of the family, weakly or not involved in phagophore growth during mitophagy. This chain is Cysteine protease ATG4C, found in Mus musculus (Mouse).